Reading from the N-terminus, the 115-residue chain is Phosphoribosyl-AMP cyclohydrolase (115 aa).

Residue Asp-80 participates in Mg(2+) binding. Cys-81 is a binding site for Zn(2+). Residues Asp-82 and Asp-84 each contribute to the Mg(2+) site. Residues Cys-97 and Cys-104 each contribute to the Zn(2+) site.

This sequence belongs to the PRA-CH family. As to quaternary structure, homodimer. Mg(2+) serves as cofactor. Requires Zn(2+) as cofactor.

It localises to the cytoplasm. The enzyme catalyses 1-(5-phospho-beta-D-ribosyl)-5'-AMP + H2O = 1-(5-phospho-beta-D-ribosyl)-5-[(5-phospho-beta-D-ribosylamino)methylideneamino]imidazole-4-carboxamide. Its pathway is amino-acid biosynthesis; L-histidine biosynthesis; L-histidine from 5-phospho-alpha-D-ribose 1-diphosphate: step 3/9. In terms of biological role, catalyzes the hydrolysis of the adenine ring of phosphoribosyl-AMP. The sequence is that of Phosphoribosyl-AMP cyclohydrolase from Mycolicibacterium paratuberculosis (strain ATCC BAA-968 / K-10) (Mycobacterium paratuberculosis).